A 37-amino-acid chain; its full sequence is Large ribosomal subunit protein bL36 (37 aa).

Belongs to the bacterial ribosomal protein bL36 family.

In Halalkalibacterium halodurans (strain ATCC BAA-125 / DSM 18197 / FERM 7344 / JCM 9153 / C-125) (Bacillus halodurans), this protein is Large ribosomal subunit protein bL36.